The following is a 448-amino-acid chain: Probable glycine dehydrogenase (decarboxylating) subunit 1 (448 aa).

The protein belongs to the GcvP family. N-terminal subunit subfamily. The glycine cleavage system is composed of four proteins: P, T, L and H. In this organism, the P 'protein' is a heterodimer of two subunits.

The enzyme catalyses N(6)-[(R)-lipoyl]-L-lysyl-[glycine-cleavage complex H protein] + glycine + H(+) = N(6)-[(R)-S(8)-aminomethyldihydrolipoyl]-L-lysyl-[glycine-cleavage complex H protein] + CO2. The glycine cleavage system catalyzes the degradation of glycine. The P protein binds the alpha-amino group of glycine through its pyridoxal phosphate cofactor; CO(2) is released and the remaining methylamine moiety is then transferred to the lipoamide cofactor of the H protein. This is Probable glycine dehydrogenase (decarboxylating) subunit 1 from Caulobacter vibrioides (strain ATCC 19089 / CIP 103742 / CB 15) (Caulobacter crescentus).